Consider the following 60-residue polypeptide: Large ribosomal subunit protein bL32 (60 aa).

Residues 1-16 (MAVPKKKTSKSRKNMR) are compositionally biased toward basic residues. The disordered stretch occupies residues 1 to 20 (MAVPKKKTSKSRKNMRRAHD).

Belongs to the bacterial ribosomal protein bL32 family.

The polypeptide is Large ribosomal subunit protein bL32 (Geobacter metallireducens (strain ATCC 53774 / DSM 7210 / GS-15)).